A 643-amino-acid polypeptide reads, in one-letter code: Galactan 5-O-arabinofuranosyltransferase (643 aa).

The next 13 helical transmembrane spans lie at 25 to 45 (VLVA…VAVV), 66 to 86 (ALTT…GWLW), 97 to 117 (LGGL…PLGA), 180 to 200 (FKPW…VLWW), 205 to 225 (FEYA…YSSP), 229 to 249 (AAMI…GLGA), 255 to 272 (WAAV…ATWY), 276 to 293 (VAYG…LAGS), 309 to 329 (LAVV…PYLL), 355 to 375 (FPML…LWLV), 384 to 404 (AGAL…SMLA), 420 to 440 (LSVL…QALG), and 445 to 465 (GVIP…SQDI). Topologically, residues 466 to 643 (PDVLRPDLTI…LAIRKPQESA (178 aa)) are extracellular.

This sequence belongs to the glycosyltransferase 85 family.

The protein resides in the cell membrane. It carries out the reaction Adds an alpha-D-arabinofuranosyl group from trans,octacis-decaprenylphospho-beta-D-arabinofuranose at the 5-O-position of the eighth, tenth and twelfth galactofuranose unit of the galactofuranan chain of [beta-D-galactofuranosyl-(1-&gt;5)-beta-D-galactofuranosyl-(1-&gt;6)]14-beta-D-galactofuranosyl-(1-&gt;5)-beta-D-galactofuranosyl-(1-&gt;4)-alpha-L-rhamnopyranosyl-(1-&gt;3)-N-acetyl-alpha-D-glucosaminyl-diphospho-trans,octacis-decaprenol.. It functions in the pathway cell wall biogenesis; cell wall polysaccharide biosynthesis. Functionally, involved in the biosynthesis of the arabinogalactan (AG) region of the mycolylarabinogalactan-peptidoglycan (mAGP) complex, an essential component of the mycobacterial cell wall. Catalyzes the addition of the first key arabinofuranosyl (Araf) residue from the sugar donor decaprenyl-phospho-arabinose (DPA) on the C-5 of a 6-linked galactofuranosyl (Galf) of the galactan domain, thus 'priming' the galactan for further elaboration by other arabinofuranosyltransferases. It is not able to add an Araf residue to a terminal Galf. The chain is Galactan 5-O-arabinofuranosyltransferase from Mycobacterium tuberculosis (strain CDC 1551 / Oshkosh).